A 367-amino-acid chain; its full sequence is Aminomethyltransferase (367 aa).

This sequence belongs to the GcvT family. As to quaternary structure, the glycine cleavage system is composed of four proteins: P, T, L and H.

It catalyses the reaction N(6)-[(R)-S(8)-aminomethyldihydrolipoyl]-L-lysyl-[protein] + (6S)-5,6,7,8-tetrahydrofolate = N(6)-[(R)-dihydrolipoyl]-L-lysyl-[protein] + (6R)-5,10-methylene-5,6,7,8-tetrahydrofolate + NH4(+). In terms of biological role, the glycine cleavage system catalyzes the degradation of glycine. The protein is Aminomethyltransferase of Mycobacterium bovis (strain ATCC BAA-935 / AF2122/97).